Consider the following 791-residue polypeptide: Sphingomyelin phosphodiesterase 4 (791 aa).

Residues 755-775 (LFALLSFGLFSSTGLILIISF) traverse the membrane as a helical segment.

The cofactor is Mg(2+).

Its subcellular location is the endoplasmic reticulum membrane. It localises to the golgi apparatus membrane. It is found in the nucleus envelope. The protein resides in the cell membrane. The protein localises to the sarcolemma. The enzyme catalyses a sphingomyelin + H2O = phosphocholine + an N-acylsphing-4-enine + H(+). Its function is as follows. Catalyzes the hydrolysis of membrane sphingomyelin to form phosphorylcholine and ceramide. It has a relevant role in the homeostasis of membrane sphingolipids, thereby influencing membrane integrity, and endoplasmic reticulum organization and function. May sensitize cells to DNA damage-induced apoptosis. The chain is Sphingomyelin phosphodiesterase 4 (smpd4) from Danio rerio (Zebrafish).